We begin with the raw amino-acid sequence, 315 residues long: Voltage-dependent calcium channel gamma-3 subunit (315 aa).

4 helical membrane-spanning segments follow: residues 8-28 (IQML…TIAV), 104-124 (SSVF…CVAA), 135-155 (ILSA…GIIV), and 181-201 (FGAF…HIYI). The interval 232–253 (RRRSSSRSTEPRSRDLSPISKG) is disordered. At S248 the chain carries Phosphoserine.

It belongs to the PMP-22/EMP/MP20 family. CACNG subfamily. The L-type calcium channel is composed of five subunits: alpha-1, alpha-2/delta, beta and gamma. Acts as an auxiliary subunit for AMPA-selective glutamate receptors (AMPARs). Found in a complex with GRIA1, GRIA2, GRIA3, GRIA4, CNIH2, CNIH3, CACNG2, CACNG4, CACNG5, CACNG7 and CACNG8. Interacts with AP4M1 and GRIA1; associates GRIA1 with the adaptor protein complex 4 (AP-4) to target GRIA1 to the somatodendritic compartment of neurons.

The protein localises to the membrane. Regulates the trafficking to the somatodendritic compartment and gating properties of AMPA-selective glutamate receptors (AMPARs). Promotes their targeting to the cell membrane and synapses and modulates their gating properties by slowing their rates of activation, deactivation and desensitization. Does not show subunit-specific AMPA receptor regulation and regulates all AMPAR subunits. Thought to stabilize the calcium channel in an inactivated (closed) state. This Mus musculus (Mouse) protein is Voltage-dependent calcium channel gamma-3 subunit (Cacng3).